The sequence spans 520 residues: Aspartate-proton symporter (520 aa).

A run of 14 helical transmembrane segments spans residues 13-33, 49-69, 85-105, 130-150, 161-181, 201-221, 232-252, 281-301, 345-365, 366-386, 402-422, 425-445, 460-480, and 482-502; these read LFDLILIGMGAIFGSAWLFAV, ILGGAIILLIGLVYAELGAAL, HLVGYLISFVTIVAYTSLISI, TISGWILQFALLCLFFLLNYW, IISIFKYIVPITIIIVLIFHF, AAISTGGVMFAYLGLHPIVSV, IPIALIICIIVSTIIYTVLQV, IAVMLGLGWLATLVILDAILS, WLSFALSIFWTLPFPSWNALV, NVCSVALILSYAIAPISSAAL, MSIIGPLSFIFTAFIVYWSGW, VSWLLGSQLVMFLIYLCFSKY, AWWLIGFYIMMLIFSYIGSFG, and GLGIISNPVDLILVAIGSLAI.

The protein belongs to the amino acid-polyamine-organocation (APC) superfamily. AGT (TC 2.A.3.11) family.

Its subcellular location is the cell membrane. In terms of biological role, uptake of L-aspartate with the concomitant import of a proton. Can also transport aspartate hydroxamate and L-glutamate with lower affinity and efficiency. The chain is Aspartate-proton symporter (yveA) from Bacillus subtilis (strain 168).